A 237-amino-acid polypeptide reads, in one-letter code: Orotidine 5'-phosphate decarboxylase (237 aa).

Substrate is bound by residues Asp-17, Lys-39, 66–75 (DLKLHDIGNT), Thr-121, Arg-182, Gln-191, Gly-211, and Arg-212. Lys-68 functions as the Proton donor in the catalytic mechanism.

The protein belongs to the OMP decarboxylase family. Type 1 subfamily. Homodimer.

It catalyses the reaction orotidine 5'-phosphate + H(+) = UMP + CO2. It participates in pyrimidine metabolism; UMP biosynthesis via de novo pathway; UMP from orotate: step 2/2. Its function is as follows. Catalyzes the decarboxylation of orotidine 5'-monophosphate (OMP) to uridine 5'-monophosphate (UMP). This chain is Orotidine 5'-phosphate decarboxylase, found in Bradyrhizobium diazoefficiens (strain JCM 10833 / BCRC 13528 / IAM 13628 / NBRC 14792 / USDA 110).